The sequence spans 396 residues: Nitrate regulatory protein (396 aa).

The region spanning 37–284 (GQISALVHML…VDLLNAADAL (248 aa)) is the NIT domain. The ANTAR domain maps to 323–384 (LQQLSGQLAS…RMVEIARALL (62 aa)).

In terms of biological role, nitrate- and nitrite-responsive positive regulator for nasFEDCBA operon expression. NasR protein binds to the factor-independent terminator site located in the nasF operon leader RNA to effect transcription antitermination. The chain is Nitrate regulatory protein (nasR) from Klebsiella oxytoca.